Consider the following 213-residue polypeptide: Imidazole glycerol phosphate synthase subunit HisH (213 aa).

The 210-residue stretch at 4 to 213 (SIAIVDYGMG…LYRNFVHWKP (210 aa)) folds into the Glutamine amidotransferase type-1 domain. The active-site Nucleophile is Cys83. Active-site residues include His193 and Glu195.

As to quaternary structure, heterodimer of HisH and HisF.

It is found in the cytoplasm. The enzyme catalyses 5-[(5-phospho-1-deoxy-D-ribulos-1-ylimino)methylamino]-1-(5-phospho-beta-D-ribosyl)imidazole-4-carboxamide + L-glutamine = D-erythro-1-(imidazol-4-yl)glycerol 3-phosphate + 5-amino-1-(5-phospho-beta-D-ribosyl)imidazole-4-carboxamide + L-glutamate + H(+). The catalysed reaction is L-glutamine + H2O = L-glutamate + NH4(+). It participates in amino-acid biosynthesis; L-histidine biosynthesis; L-histidine from 5-phospho-alpha-D-ribose 1-diphosphate: step 5/9. IGPS catalyzes the conversion of PRFAR and glutamine to IGP, AICAR and glutamate. The HisH subunit catalyzes the hydrolysis of glutamine to glutamate and ammonia as part of the synthesis of IGP and AICAR. The resulting ammonia molecule is channeled to the active site of HisF. The polypeptide is Imidazole glycerol phosphate synthase subunit HisH (Burkholderia multivorans (strain ATCC 17616 / 249)).